We begin with the raw amino-acid sequence, 174 residues long: CASP-like protein 4D2 (174 aa).

Over 1-14 (MAPPPPSPPAVSLK) the chain is Cytoplasmic. A helical membrane pass occupies residues 15 to 35 (VLLLLLRVLTGVFLVIALIIL). Residues 36–60 (STNSVTIVSQGSALKFHFKDVYAYR) lie on the Extracellular side of the membrane. The helical transmembrane segment at 61–81 (YMLSAAVIGLVYAVIQLFFTI) threads the bilayer. Topologically, residues 82–97 (SEFATGVKNPFNYQLD) are cytoplasmic. The helical transmembrane segment at 98–118 (FYGDKLISYLVATGSAAGFGV) threads the bilayer. The Extracellular portion of the chain corresponds to 119–150 (TKDLKDTFLALVALDSTDPVDKFFSKGYASAS). Residues 151-171 (LLLFAFICLAVLSVFSSFAMA) form a helical membrane-spanning segment. At 172 to 174 (KRN) the chain is on the cytoplasmic side.

The protein belongs to the Casparian strip membrane proteins (CASP) family. Homodimer and heterodimers.

The protein localises to the cell membrane. The protein is CASP-like protein 4D2 of Arabidopsis thaliana (Mouse-ear cress).